A 910-amino-acid chain; its full sequence is 2-oxoglutarate dehydrogenase E1 component (910 aa).

The protein belongs to the alpha-ketoglutarate dehydrogenase family. In terms of assembly, homodimer. Part of the 2-oxoglutarate dehydrogenase (OGDH) complex composed of E1 (2-oxoglutarate dehydrogenase), E2 (dihydrolipoamide succinyltransferase) and E3 (dihydrolipoamide dehydrogenase); the complex contains multiple copies of the three enzymatic components (E1, E2 and E3). Requires thiamine diphosphate as cofactor.

It carries out the reaction N(6)-[(R)-lipoyl]-L-lysyl-[protein] + 2-oxoglutarate + H(+) = N(6)-[(R)-S(8)-succinyldihydrolipoyl]-L-lysyl-[protein] + CO2. In terms of biological role, E1 component of the 2-oxoglutarate dehydrogenase (OGDH) complex which catalyzes the decarboxylation of 2-oxoglutarate, the first step in the conversion of 2-oxoglutarate to succinyl-CoA and CO(2). In Staphylococcus aureus (strain N315), this protein is 2-oxoglutarate dehydrogenase E1 component.